The primary structure comprises 248 residues: Ubiquinone/menaquinone biosynthesis C-methyltransferase UbiE (248 aa).

The S-adenosyl-L-methionine site is built by S68 and D92.

It belongs to the class I-like SAM-binding methyltransferase superfamily. MenG/UbiE family.

It carries out the reaction a 2-demethylmenaquinol + S-adenosyl-L-methionine = a menaquinol + S-adenosyl-L-homocysteine + H(+). It catalyses the reaction a 2-methoxy-6-(all-trans-polyprenyl)benzene-1,4-diol + S-adenosyl-L-methionine = a 5-methoxy-2-methyl-3-(all-trans-polyprenyl)benzene-1,4-diol + S-adenosyl-L-homocysteine + H(+). Its pathway is quinol/quinone metabolism; menaquinone biosynthesis; menaquinol from 1,4-dihydroxy-2-naphthoate: step 2/2. The protein operates within cofactor biosynthesis; ubiquinone biosynthesis. In terms of biological role, methyltransferase required for the conversion of demethylmenaquinol (DMKH2) to menaquinol (MKH2) and the conversion of 2-polyprenyl-6-methoxy-1,4-benzoquinol (DDMQH2) to 2-polyprenyl-3-methyl-6-methoxy-1,4-benzoquinol (DMQH2). The protein is Ubiquinone/menaquinone biosynthesis C-methyltransferase UbiE of Rickettsia peacockii (strain Rustic).